Reading from the N-terminus, the 720-residue chain is Pollen receptor-like kinase 1 (720 aa).

The LRR 1; degenerate repeat unit spans residues 40–64; sequence LCSRGHLLIIFLLLVSPFNDAAVDV. An LRR 2; degenerate repeat occupies 123–146; it reads LGVLCYEGDVWGLQLENLDLSGVI. LRR repeat units lie at residues 154–179, 226–248, and 249–273; these read LHFLRTLSFMNNSFKGQCLIGISLEP, LPQVFELSLENNRFTGSIPHFPP, and NVLKVLNLSNNQLEGPIPPALSLMD. A disordered region spans residues 288 to 319; sequence LESACNSPSQEANNPDSRNSSTISGQSSTDVI. Residues 291–317 are compositionally biased toward polar residues; that stretch reads ACNSPSQEANNPDSRNSSTISGQSSTD. The helical transmembrane segment at 330 to 350 threads the bilayer; that stretch reads MLIVAVCLVVLCLLIVLILII. Composition is skewed to polar residues over residues 356–382 and 389–405; these read SSSQNPQPVESNYSNNDRDQNAFTSSA and LSGNSTYSNNQHSNSNK. A disordered region spans residues 356–409; the sequence is SSSQNPQPVESNYSNNDRDQNAFTSSAPDDHVTLSGNSTYSNNQHSNSNKAEAP. The 269-residue stretch at 434-702 folds into the Protein kinase domain; it reads RASAEVLGSG…KEVVQSIQSL (269 aa). ATP contacts are provided by residues 440–448 and Lys-462; that span reads LGSGNLGSS.

This sequence belongs to the protein kinase superfamily. As to quaternary structure, interacts with KIP1. Post-translationally, autophosphorylated. As to expression, expressed in mature pollen grains and pollen tubes, but not in style, petal, leaf, root or sepal. Very low expression in the ovary.

It localises to the microsome membrane. It is found in the cytoplasm. It catalyses the reaction L-seryl-[protein] + ATP = O-phospho-L-seryl-[protein] + ADP + H(+). It carries out the reaction L-threonyl-[protein] + ATP = O-phospho-L-threonyl-[protein] + ADP + H(+). The catalysed reaction is L-tyrosyl-[protein] + ATP = O-phospho-L-tyrosyl-[protein] + ADP + H(+). Its function is as follows. Dual-specificity kinase with both serine/threonine and tyrosine kinase activities. Required for postmeiotic development of microspores. Involved in embryo sac development at the late stages of megagametogenesis. Involved in the phosphorylation of KIP1. The sequence is that of Pollen receptor-like kinase 1 from Petunia integrifolia (Violet-flowered petunia).